The sequence spans 273 residues: 4-hydroxy-tetrahydrodipicolinate reductase (273 aa).

Residues 12–17 (GAGGRM) and Glu38 contribute to the NAD(+) site. Arg39 lines the NADP(+) pocket. NAD(+) contacts are provided by residues 102–104 (GTT) and 126–129 (AANF). His159 (proton donor/acceptor) is an active-site residue. His160 serves as a coordination point for (S)-2,3,4,5-tetrahydrodipicolinate. The active-site Proton donor is Lys163. (S)-2,3,4,5-tetrahydrodipicolinate is bound at residue 169–170 (GT).

It belongs to the DapB family. As to quaternary structure, homotetramer.

It is found in the cytoplasm. The enzyme catalyses (S)-2,3,4,5-tetrahydrodipicolinate + NAD(+) + H2O = (2S,4S)-4-hydroxy-2,3,4,5-tetrahydrodipicolinate + NADH + H(+). It catalyses the reaction (S)-2,3,4,5-tetrahydrodipicolinate + NADP(+) + H2O = (2S,4S)-4-hydroxy-2,3,4,5-tetrahydrodipicolinate + NADPH + H(+). Its pathway is amino-acid biosynthesis; L-lysine biosynthesis via DAP pathway; (S)-tetrahydrodipicolinate from L-aspartate: step 4/4. Its function is as follows. Catalyzes the conversion of 4-hydroxy-tetrahydrodipicolinate (HTPA) to tetrahydrodipicolinate. The protein is 4-hydroxy-tetrahydrodipicolinate reductase of Salmonella typhimurium (strain LT2 / SGSC1412 / ATCC 700720).